A 226-amino-acid polypeptide reads, in one-letter code: V-type proton ATPase subunit E 1 (226 aa).

Residue A2 is modified to N-acetylalanine. At Y56 the chain carries Phosphotyrosine.

It belongs to the V-ATPase E subunit family. In terms of assembly, V-ATPase is a heteromultimeric enzyme made up of two complexes: the ATP-hydrolytic V1 complex and the proton translocation V0 complex. The V1 complex consists of three catalytic AB heterodimers that form a heterohexamer, three peripheral stalks each consisting of EG heterodimers, one central rotor including subunits D and F, and the regulatory subunits C and H. The proton translocation complex V0 consists of the proton transport subunit a, a ring of proteolipid subunits c9c'', rotary subunit d, subunits e and f, and the accessory subunits ATP6AP1/Ac45 and ATP6AP2/PRR. Interacts with RABL2/RABL2A; binds preferentially to GTP-bound RABL2. Interacts with ALDOC. Interacts with RAB11B. In terms of tissue distribution, kidney; localizes to early distal nephron, encompassing thick ascending limbs and distal convoluted tubules (at protein level). Ubiquitous. High expression in the skin.

Its subcellular location is the apical cell membrane. It is found in the cytoplasmic vesicle. The protein localises to the secretory vesicle. The protein resides in the synaptic vesicle membrane. It localises to the clathrin-coated vesicle membrane. Its function is as follows. Subunit of the V1 complex of vacuolar(H+)-ATPase (V-ATPase), a multisubunit enzyme composed of a peripheral complex (V1) that hydrolyzes ATP and a membrane integral complex (V0) that translocates protons. V-ATPase is responsible for acidifying and maintaining the pH of intracellular compartments and in some cell types, is targeted to the plasma membrane, where it is responsible for acidifying the extracellular environment. The sequence is that of V-type proton ATPase subunit E 1 (ATP6V1E1) from Homo sapiens (Human).